The sequence spans 101 residues: Small ribosomal subunit protein uS14 (101 aa).

Belongs to the universal ribosomal protein uS14 family. Part of the 30S ribosomal subunit. Contacts proteins S3 and S10.

Its function is as follows. Binds 16S rRNA, required for the assembly of 30S particles and may also be responsible for determining the conformation of the 16S rRNA at the A site. The protein is Small ribosomal subunit protein uS14 of Cronobacter sakazakii (strain ATCC BAA-894) (Enterobacter sakazakii).